The following is a 66-amino-acid chain: MAKGKDVRVTIILECTSCVRNDSKKELAGISRYITQKNRHNTPSRLELRKFCPYCYKHTIHGEIKK.

Belongs to the bacterial ribosomal protein bL33 family.

The protein resides in the plastid. The protein localises to the chloroplast. The polypeptide is Large ribosomal subunit protein bL33c (Lobularia maritima (Sweet alyssum)).